Here is a 140-residue protein sequence, read N- to C-terminus: Nucleoside diphosphate kinase (140 aa).

Positions 11, 59, 87, 93, 104, and 114 each coordinate ATP. Histidine 117 (pros-phosphohistidine intermediate) is an active-site residue.

It belongs to the NDK family. In terms of assembly, homotetramer. Mg(2+) serves as cofactor.

It is found in the cytoplasm. It catalyses the reaction a 2'-deoxyribonucleoside 5'-diphosphate + ATP = a 2'-deoxyribonucleoside 5'-triphosphate + ADP. It carries out the reaction a ribonucleoside 5'-diphosphate + ATP = a ribonucleoside 5'-triphosphate + ADP. Functionally, major role in the synthesis of nucleoside triphosphates other than ATP. The ATP gamma phosphate is transferred to the NDP beta phosphate via a ping-pong mechanism, using a phosphorylated active-site intermediate. This Jannaschia sp. (strain CCS1) protein is Nucleoside diphosphate kinase.